The primary structure comprises 414 residues: 26S proteasome regulatory subunit 6B homolog (414 aa).

Residues 1–33 (MAATMVLDPKPSSTPPPTLPNPYTTDSQSTDSE) form a disordered region. Over residues 21-30 (NPYTTDSQST) the composition is skewed to low complexity. Positions 55–81 (EYVKDELKNLKREQLRSQEEVKRIQSV) form a coiled coil. 202 to 209 (GPPGTGKT) is a binding site for ATP.

The protein belongs to the AAA ATPase family.

Its subcellular location is the cytoplasm. It localises to the nucleus. Its function is as follows. The 26S proteasome is involved in the ATP-dependent degradation of ubiquitinated proteins. The regulatory (or ATPase) complex confers ATP dependency and substrate specificity to the 26S complex. The chain is 26S proteasome regulatory subunit 6B homolog from Helianthus annuus (Common sunflower).